We begin with the raw amino-acid sequence, 271 residues long: Keratin-associated protein 10-5 (271 aa).

A run of 22 repeats spans residues 26–30, 51–55, 73–77, 78–82, 88–92, 93–97, 98–102, 110–114, 120–124, 130–134, 135–139, 140–144, 152–156, 162–166, 177–181, 187–191, 199–203, 209–213, 214–218, 233–237, 240–244, and 251–255. The segment at 26-255 is 22 X 5 AA repeats of C-C-X(3); sequence CCEPPCGTAP…SYQASCCRPA (230 aa).

It belongs to the KRTAP type 10 family. As to quaternary structure, interacts with hair keratins. In terms of tissue distribution, restricted to a narrow region of the hair fiber cuticle, lying approximately 20 cell layers above the apex of the dermal papilla of the hair root; not detected in any other tissues.

In terms of biological role, in the hair cortex, hair keratin intermediate filaments are embedded in an interfilamentous matrix, consisting of hair keratin-associated proteins (KRTAP), which are essential for the formation of a rigid and resistant hair shaft through their extensive disulfide bond cross-linking with abundant cysteine residues of hair keratins. The matrix proteins include the high-sulfur and high-glycine-tyrosine keratins. This chain is Keratin-associated protein 10-5 (KRTAP10-5), found in Homo sapiens (Human).